The sequence spans 228 residues: Woronin body membrane protein wscA (228 aa).

4 consecutive transmembrane segments (helical) span residues 89–109 (MTLY…GILQ), 130–150 (LIVS…IAGA), 162–182 (AGFM…LAFA), and 185–205 (FLPE…IGTY).

The protein belongs to the peroxisomal membrane protein PXMP2/4 family. As to quaternary structure, self-assembles into detergent-resistant oligomers and forms a complex with hexA assemblies.

It localises to the peroxisome membrane. The protein resides in the cell septum. In terms of biological role, woronin sorting complex protein involved in both Woronin bodies (WB) formation and inherence. Localizes to large peroxisome membranes where it self-assembles into detergent-resistant oligomers that envelop hex-1 assemblies, producing asymmetrical nascent WBs. These structures are then delivered to the cell cortex, which permits partitioning of the nascent WB and WB inheritance. This chain is Woronin body membrane protein wscA, found in Aspergillus fumigatus (strain ATCC MYA-4609 / CBS 101355 / FGSC A1100 / Af293) (Neosartorya fumigata).